Here is a 553-residue protein sequence, read N- to C-terminus: Putative transport protein PM1071 (553 aa).

The next 5 helical transmembrane spans lie at isoleucine 4 to tryptophan 24, glycine 28 to asparagine 48, phenylalanine 65 to serine 85, leucine 91 to isoleucine 111, and methionine 157 to isoleucine 177. RCK C-terminal domains are found at residues lysine 190–glutamate 276 and glutamate 277–asparagine 361. Helical transmembrane passes span methionine 371–isoleucine 391, alanine 403–phenylalanine 425, isoleucine 439–valine 459, leucine 464–valine 484, leucine 496–isoleucine 516, and leucine 533–leucine 553.

This sequence belongs to the AAE transporter (TC 2.A.81) family. YidE subfamily.

The protein localises to the cell membrane. This chain is Putative transport protein PM1071, found in Pasteurella multocida (strain Pm70).